The primary structure comprises 407 residues: Probable tRNA sulfurtransferase (407 aa).

The 105-residue stretch at 61 to 165 folds into the THUMP domain; it reads NEITNRLSKI…LDAIYMYEEV (105 aa). Residues 183–184, 208–209, Arg-265, Gly-287, and Gln-296 each bind ATP; these read ML and HF.

Belongs to the ThiI family.

It is found in the cytoplasm. The enzyme catalyses [ThiI sulfur-carrier protein]-S-sulfanyl-L-cysteine + a uridine in tRNA + 2 reduced [2Fe-2S]-[ferredoxin] + ATP + H(+) = [ThiI sulfur-carrier protein]-L-cysteine + a 4-thiouridine in tRNA + 2 oxidized [2Fe-2S]-[ferredoxin] + AMP + diphosphate. The catalysed reaction is [ThiS sulfur-carrier protein]-C-terminal Gly-Gly-AMP + S-sulfanyl-L-cysteinyl-[cysteine desulfurase] + AH2 = [ThiS sulfur-carrier protein]-C-terminal-Gly-aminoethanethioate + L-cysteinyl-[cysteine desulfurase] + A + AMP + 2 H(+). Its pathway is cofactor biosynthesis; thiamine diphosphate biosynthesis. Catalyzes the ATP-dependent transfer of a sulfur to tRNA to produce 4-thiouridine in position 8 of tRNAs, which functions as a near-UV photosensor. Also catalyzes the transfer of sulfur to the sulfur carrier protein ThiS, forming ThiS-thiocarboxylate. This is a step in the synthesis of thiazole, in the thiamine biosynthesis pathway. The sulfur is donated as persulfide by IscS. This is Probable tRNA sulfurtransferase from Staphylococcus aureus (strain MRSA252).